A 275-amino-acid polypeptide reads, in one-letter code: Large ribosomal subunit protein uL2c (275 aa).

Disordered stretches follow at residues Lys-36–Lys-56 and Val-224–Lys-275. The span at Leu-255–Lys-275 shows a compositional bias: basic residues.

This sequence belongs to the universal ribosomal protein uL2 family. As to quaternary structure, part of the 50S ribosomal subunit.

It is found in the plastid. The protein resides in the chloroplast. This is Large ribosomal subunit protein uL2c (rpl2) from Gracilaria tenuistipitata var. liui (Red alga).